The chain runs to 489 residues: MPSESSVKATAAPPPFPLPPDGGWGWVVVCASFISIGFSYAFPKAVTVFFNDIKDIFKTTSSQIAWISSIMLAVMYAGGPISSVLVNNYGSRPVVIVGGLLCCTGMILASFSSSVIELYLTVGFIGGLGLAFNLQPALTIIGKYFYRKRPLANGFAMAGSPVFLSTLAPFNQFLFNSYGWKGSFLILGAIFLHSCVAGCLMRPVGPSPRAAKSKSKVGSRQDSSTKRLSKVSTAEKINRFLDFGLFTHRGFLIYLSGNVVLFLGMFAPIIFLAPYAKDKGVDDYNSAFLLSVMAFTDMFARPSVGLIANTSLIRPRIQYLFSVAIMFTGICHLLCPLAHSYTALVVYVIFFGIGFGSISSLLFECLMDQVGASRFSSAVGLVTIVECCPVLFGPPLAGKLLDITGQYKYLYIASGIVVLSSGIYLLICNAINYRLLEKERKREKARRKKSASQASKEMEALSRSKQDDVTVKVSNTHNPPSDRDKESSI.

Topologically, residues 1-21 (MPSESSVKATAAPPPFPLPPD) are cytoplasmic. A helical transmembrane segment spans residues 22–42 (GGWGWVVVCASFISIGFSYAF). Residues 43 to 65 (PKAVTVFFNDIKDIFKTTSSQIA) are Extracellular-facing. A helical membrane pass occupies residues 66–86 (WISSIMLAVMYAGGPISSVLV). The Cytoplasmic portion of the chain corresponds to 87–95 (NNYGSRPVV). Residues 96-116 (IVGGLLCCTGMILASFSSSVI) traverse the membrane as a helical segment. Residues 117-121 (ELYLT) are Extracellular-facing. The helical transmembrane segment at 122-142 (VGFIGGLGLAFNLQPALTIIG) threads the bilayer. The Cytoplasmic segment spans residues 143 to 154 (KYFYRKRPLANG). The chain crosses the membrane as a helical span at residues 155–175 (FAMAGSPVFLSTLAPFNQFLF). At 176-179 (NSYG) the chain is on the extracellular side. The helical transmembrane segment at 180–200 (WKGSFLILGAIFLHSCVAGCL) threads the bilayer. The Cytoplasmic segment spans residues 201–250 (MRPVGPSPRAAKSKSKVGSRQDSSTKRLSKVSTAEKINRFLDFGLFTHRG). The segment at 206–227 (PSPRAAKSKSKVGSRQDSSTKR) is disordered. The chain crosses the membrane as a helical span at residues 251–271 (FLIYLSGNVVLFLGMFAPIIF). Residues 272 to 286 (LAPYAKDKGVDDYNS) lie on the Extracellular side of the membrane. A helical membrane pass occupies residues 287–307 (AFLLSVMAFTDMFARPSVGLI). The Cytoplasmic portion of the chain corresponds to 308-316 (ANTSLIRPR). The chain crosses the membrane as a helical span at residues 317–337 (IQYLFSVAIMFTGICHLLCPL). The Extracellular portion of the chain corresponds to 338-342 (AHSYT). Residues 343–363 (ALVVYVIFFGIGFGSISSLLF) form a helical membrane-spanning segment. Topologically, residues 364–377 (ECLMDQVGASRFSS) are cytoplasmic. Residues 378–398 (AVGLVTIVECCPVLFGPPLAG) form a helical membrane-spanning segment. Residues 399–410 (KLLDITGQYKYL) are Extracellular-facing. The helical transmembrane segment at 411–431 (YIASGIVVLSSGIYLLICNAI) threads the bilayer. Residues 432–489 (NYRLLEKERKREKARRKKSASQASKEMEALSRSKQDDVTVKVSNTHNPPSDRDKESSI) are Cytoplasmic-facing. The disordered stretch occupies residues 441–489 (KREKARRKKSASQASKEMEALSRSKQDDVTVKVSNTHNPPSDRDKESSI). 2 stretches are compositionally biased toward basic and acidic residues: residues 456 to 470 (KEME…DDVT) and 480 to 489 (PSDRDKESSI).

Belongs to the major facilitator superfamily. Monocarboxylate porter (TC 2.A.1.13) family. Homodimer. Interacts with GRID2IP. Interacts with EMB; interaction mediates SLC16A7 targeting to the plasma membrane. Interacts with isoform 2 of BSG. As to expression, detected in brain and kidney (at protein level).

Its subcellular location is the cell membrane. It is found in the basolateral cell membrane. The protein localises to the cytoplasm. It catalyses the reaction 3-methyl-2-oxobutanoate(out) + H(+)(out) = 3-methyl-2-oxobutanoate(in) + H(+)(in). The catalysed reaction is (S)-lactate(in) + H(+)(in) = (S)-lactate(out) + H(+)(out). It carries out the reaction acetoacetate(out) + H(+)(out) = acetoacetate(in) + H(+)(in). The enzyme catalyses (R)-3-hydroxybutanoate(out) + H(+)(out) = (R)-3-hydroxybutanoate(in) + H(+)(in). It catalyses the reaction 4-methyl-2-oxopentanoate(out) + H(+)(out) = 4-methyl-2-oxopentanoate(in) + H(+)(in). The catalysed reaction is pyruvate(out) + H(+)(out) = pyruvate(in) + H(+)(in). It carries out the reaction (S)-3-hydroxybutanoate(out) + H(+)(out) = (S)-3-hydroxybutanoate(in) + H(+)(in). With respect to regulation, transport activity exhibits steep dependence on substrate concentration. Substrate concentration sensitivity of SLC16A7 arises from the strong inter-subunit cooperativity of the SLC16A7 dimer during transport. Inhibited by AR-C155858. Functionally, proton-coupled monocarboxylate symporter. Catalyzes the rapid transport across the plasma membrane of monocarboxylates such as L-lactate, pyruvate and ketone bodies, acetoacetate, beta-hydroxybutyrate and acetate. Dimerization is functionally required and both subunits work cooperatively in transporting substrate. In Rattus norvegicus (Rat), this protein is Monocarboxylate transporter 2 (Slc16a7).